A 446-amino-acid polypeptide reads, in one-letter code: Chromosomal replication initiator protein DnaA (446 aa).

Residues 1–92 are domain I, interacts with DnaA modulators; the sequence is MENISDLWNS…SQAEEEIDLP (92 aa). Residues 93–109 form a domain II region; the sequence is PSKPNAAQDDSNHLPQS. Residues 110 to 326 form a domain III, AAA+ region region; it reads MLNPKYTFDT…GALIRVVAYS (217 aa). Residues Gly-154, Gly-156, Lys-157, and Thr-158 each coordinate ATP. The domain IV, binds dsDNA stretch occupies residues 327–446; the sequence is SLINKDINAD…QVEEINDILK (120 aa).

It belongs to the DnaA family. As to quaternary structure, oligomerizes as a right-handed, spiral filament on DNA at oriC.

The protein localises to the cytoplasm. Its function is as follows. Plays an essential role in the initiation and regulation of chromosomal replication. ATP-DnaA binds to the origin of replication (oriC) to initiate formation of the DNA replication initiation complex once per cell cycle. Binds the DnaA box (a 9 base pair repeat at the origin) and separates the double-stranded (ds)DNA. Forms a right-handed helical filament on oriC DNA; dsDNA binds to the exterior of the filament while single-stranded (ss)DNA is stabiized in the filament's interior. The ATP-DnaA-oriC complex binds and stabilizes one strand of the AT-rich DNA unwinding element (DUE), permitting loading of DNA polymerase. After initiation quickly degrades to an ADP-DnaA complex that is not apt for DNA replication. Binds acidic phospholipids. This chain is Chromosomal replication initiator protein DnaA, found in Bacillus cereus (strain 03BB102).